The following is a 547-amino-acid chain: Chaperonin GroEL (547 aa).

ATP-binding positions include 30–33 (TLGP), Lys-51, 87–91 (DGTTT), Gly-415, and Asp-496.

It belongs to the chaperonin (HSP60) family. Forms a cylinder of 14 subunits composed of two heptameric rings stacked back-to-back. Interacts with the co-chaperonin GroES.

It is found in the cytoplasm. The enzyme catalyses ATP + H2O + a folded polypeptide = ADP + phosphate + an unfolded polypeptide.. Together with its co-chaperonin GroES, plays an essential role in assisting protein folding. The GroEL-GroES system forms a nano-cage that allows encapsulation of the non-native substrate proteins and provides a physical environment optimized to promote and accelerate protein folding. The chain is Chaperonin GroEL from Chlorobium phaeobacteroides (strain DSM 266 / SMG 266 / 2430).